A 783-amino-acid chain; its full sequence is Polyribonucleotide nucleotidyltransferase 1, mitochondrial (783 aa).

The N-terminal 45 residues, 1–45, are a transit peptide targeting the mitochondrion; that stretch reads MAACRYCCSCLRLRPLSDGPFLLPRRDRALTQLQVRALWSSAGSR. N6-acetyllysine is present on residues Lys250, Lys264, Lys285, and Lys289. Lys552 is modified (N6-succinyllysine). Positions 605–664 constitute a KH domain; sequence PVVETVQVPLSKRAKFVGPGGYNLKKLQAETGVTISQVDEETFSVFAPTPSAMHEARDFI. Residues 679–750 form the S1 motif domain; that stretch reads GAVYTATITE…ADGRMRLSRK (72 aa). Phosphoserine occurs at positions 754 and 782.

The protein belongs to the polyribonucleotide nucleotidyltransferase family. Homotrimer; in free form. Homooligomer. Component of the mitochondrial degradosome (mtEXO) complex which is a heteropentamer containing 2 copies of SUPV3L1 and 3 copies of PNPT1. As part of the mitochondrial degradosome complex, interacts with GRSF1 in an RNA-dependent manner; the interaction enhances the activity of the complex. Interacts with TCL1A; the interaction has no effect on PNPT1 exonuclease activity.

Its subcellular location is the cytoplasm. The protein localises to the mitochondrion matrix. It is found in the mitochondrion intermembrane space. The catalysed reaction is RNA(n+1) + phosphate = RNA(n) + a ribonucleoside 5'-diphosphate. In terms of biological role, RNA-binding protein implicated in numerous RNA metabolic processes. Catalyzes the phosphorolysis of single-stranded polyribonucleotides processively in the 3'-to-5' direction. Mitochondrial intermembrane factor with RNA-processing exoribonulease activity. Component of the mitochondrial degradosome (mtEXO) complex, that degrades 3' overhang double-stranded RNA with a 3'-to-5' directionality in an ATP-dependent manner. Involved in the degradation of non-coding mitochondrial transcripts (MT-ncRNA) and tRNA-like molecules. Required for correct processing and polyadenylation of mitochondrial mRNAs. Plays a role as a cytoplasmic RNA import factor that mediates the translocation of small RNA components, like the 5S RNA, the RNA subunit of ribonuclease P and the mitochondrial RNA-processing (MRP) RNA, into the mitochondrial matrix. Plays a role in mitochondrial morphogenesis and respiration; regulates the expression of the electron transport chain (ETC) components at the mRNA and protein levels. In the cytoplasm, shows a 3'-to-5' exoribonuclease mediating mRNA degradation activity; degrades c-myc mRNA upon treatment with IFNB1/IFN-beta, resulting in a growth arrest in melanoma cells. Regulates the stability of specific mature miRNAs in melanoma cells; specifically and selectively degrades miR-221, preferentially. Also plays a role in RNA cell surveillance by cleaning up oxidized RNAs. Binds to the RNA subunit of ribonuclease P, MRP RNA and miR-221 microRNA. In Homo sapiens (Human), this protein is Polyribonucleotide nucleotidyltransferase 1, mitochondrial.